The sequence spans 255 residues: Putative F-box protein L126 (255 aa).

The region spanning methionine 1–lysine 46 is the F-box domain.

The protein is Putative F-box protein L126 of Acanthamoeba polyphaga (Amoeba).